The chain runs to 145 residues: Basic phospholipase A2 PC14 (145 aa).

Residues 1 to 21 (MYPAHLLLLLAVCVSLLGASA) form the signal peptide. The propeptide occupies 22–27 (IPPLPL). 7 cysteine pairs are disulfide-bonded: Cys38-Cys98, Cys54-Cys144, Cys56-Cys72, Cys71-Cys125, Cys78-Cys118, Cys87-Cys111, and Cys105-Cys116. Residues Tyr55, Gly57, and Gly59 each contribute to the Ca(2+) site. His75 is an active-site residue. Asp76 is a binding site for Ca(2+). Asp119 is an active-site residue.

It belongs to the phospholipase A2 family. Group I subfamily. D49 sub-subfamily. It depends on Ca(2+) as a cofactor.

It localises to the secreted. The enzyme catalyses a 1,2-diacyl-sn-glycero-3-phosphocholine + H2O = a 1-acyl-sn-glycero-3-phosphocholine + a fatty acid + H(+). Functionally, PLA2 catalyzes the calcium-dependent hydrolysis of the 2-acyl groups in 3-sn-phosphoglycerides. The polypeptide is Basic phospholipase A2 PC14 (Laticauda laticaudata (Blue-ringed sea krait)).